Consider the following 277-residue polypeptide: Large ribosomal subunit protein uL2 (277 aa).

2 disordered regions span residues 28–55 and 207–277; these read EPEK…RHRG and KAGR…RTQG. 3 stretches are compositionally biased toward basic residues: residues 34–43, 209–220, and 255–265; these read THHKHSKQGR, GRTRHRGQRPHV, and LGRKTRNKKKR.

The protein belongs to the universal ribosomal protein uL2 family. In terms of assembly, part of the 50S ribosomal subunit. Forms a bridge to the 30S subunit in the 70S ribosome.

Its function is as follows. One of the primary rRNA binding proteins. Required for association of the 30S and 50S subunits to form the 70S ribosome, for tRNA binding and peptide bond formation. It has been suggested to have peptidyltransferase activity; this is somewhat controversial. Makes several contacts with the 16S rRNA in the 70S ribosome. In Microcystis aeruginosa (strain NIES-843 / IAM M-2473), this protein is Large ribosomal subunit protein uL2.